The chain runs to 301 residues: PWI domain-containing protein C825.05c (301 aa).

In terms of domain architecture, PWI spans 26–137 (STKFPASYDT…YGIPEKFILE (112 aa)). At Ser-86 the chain carries Phosphoserine. 3 stretches are compositionally biased toward basic and acidic residues: residues 145 to 182 (LKDRTEASKEESKTVTDHSNRRESRRESTYYDSRERNG), 189 to 205 (TLDRKRFHDASDTERNR), and 215 to 229 (RFSEKPRGERYDIRS). The disordered stretch occupies residues 145–301 (LKDRTEASKE…ESDSGTQKHD (157 aa)). Ser-199 carries the post-translational modification Phosphoserine. The segment covering 244-253 (PTRRRERHYR) has biased composition (basic residues). The span at 254–289 (TRDDEGFDEFGRSRDGRWRESRTSYREKHRYDRDAL) shows a compositional bias: basic and acidic residues. Polar residues predominate over residues 290 to 301 (SSESDSGTQKHD). The residue at position 291 (Ser-291) is a Phosphoserine.

It localises to the nucleus. In Schizosaccharomyces pombe (strain 972 / ATCC 24843) (Fission yeast), this protein is PWI domain-containing protein C825.05c.